We begin with the raw amino-acid sequence, 482 residues long: Pup--protein ligase (482 aa).

E16 is a Mg(2+) binding site. R60 is an ATP binding site. Residue Y62 participates in Mg(2+) binding. The active-site Proton acceptor is D64. E70 is a binding site for Mg(2+). ATP-binding residues include T73 and W440.

This sequence belongs to the Pup ligase/Pup deamidase family. Pup-conjugating enzyme subfamily.

The enzyme catalyses ATP + [prokaryotic ubiquitin-like protein]-L-glutamate + [protein]-L-lysine = ADP + phosphate + N(6)-([prokaryotic ubiquitin-like protein]-gamma-L-glutamyl)-[protein]-L-lysine.. It participates in protein degradation; proteasomal Pup-dependent pathway. The protein operates within protein modification; protein pupylation. Catalyzes the covalent attachment of the prokaryotic ubiquitin-like protein modifier Pup to the proteasomal substrate proteins, thereby targeting them for proteasomal degradation. This tagging system is termed pupylation. The ligation reaction involves the side-chain carboxylate of the C-terminal glutamate of Pup and the side-chain amino group of a substrate lysine. This chain is Pup--protein ligase, found in Corynebacterium glutamicum (strain R).